Reading from the N-terminus, the 183-residue chain is MMIVIKTAIPDVLILEPKVFGDERGFFFESYNQQTFEELIGRKVTFVQDNHSKSKKNVLRGLHFQRGENAQGKLVRCAVGEVFDVAVDIRKESPTFGQWVGVNLSAENKRQLWIPEGFAHGFVTLSEYAEFLYKATNYYSPSSEGSILWNDEAIGIEWPFSQLPELSAKDAAAPLLDQALLTE.

Substrate-binding positions include R24, E29, 48–50 (QDN), and R60. H63 (proton acceptor) is an active-site residue. Residues K73 and H120 each coordinate substrate. The active-site Proton donor is the Y133. Substrate-binding residues include E144 and K169.

The protein belongs to the dTDP-4-dehydrorhamnose 3,5-epimerase family. Homodimer.

The enzyme catalyses dTDP-4-dehydro-6-deoxy-alpha-D-glucose = dTDP-4-dehydro-beta-L-rhamnose. It participates in carbohydrate biosynthesis; dTDP-L-rhamnose biosynthesis. Its pathway is bacterial outer membrane biogenesis; LPS O-antigen biosynthesis. Its function is as follows. Catalyzes the epimerization of the C3' and C5'positions of dTDP-6-deoxy-D-xylo-4-hexulose, forming dTDP-6-deoxy-L-lyxo-4-hexulose. The protein is dTDP-4-dehydrorhamnose 3,5-epimerase of Salmonella typhimurium (strain LT2 / SGSC1412 / ATCC 700720).